The primary structure comprises 363 residues: Wortmanamides biosynthesis cluster protein C (363 aa).

The next 7 helical transmembrane spans lie at 15 to 35, 48 to 68, 95 to 115, 129 to 149, 175 to 195, 210 to 230, and 237 to 257; these read FVTL…RFVA, WLAV…LMAI, IAGL…ILAF, ICIY…CIFQ, ILGG…LAMI, VTVL…KIAV, and LYAF…ALLC. Positions 293–312 are disordered; that stretch reads SSSKNSRKHGPYDSDQSPGP. A glycan (N-linked (GlcNAc...) asparagine) is linked at N321. The tract at residues 344-363 is disordered; sequence SPITHPQAYSKQTTRQFDVV.

This sequence belongs to the SAT4 family.

It is found in the membrane. It participates in secondary metabolite biosynthesis. Its function is as follows. Part of the gene cluster that mediates the biosynthesis of wortmanamides A and B, reduced long-chain polyketides amidated with a specific omega-amino acid, 5-aminopentanoic acid (5PA). The PKS modules of TwmB are involved in the synthesis of the polyketide backbone, whereas the non-canonical C domain of TwmB is a bonafide condensation domain that specifically selects 5PA and catalyzes amidation to release polyketide chain. The C domain clearly prefers C16 and C18 fatty acyl substrates, which is consistent with simultaneous formation of both octaketide and nonaketide acyl amides wortmanamides A and B. Because TwmB lacks a designated enoylreductase (ER) domain, the required activity is provided the enoyl reductase TwmE. The roles of the remaining enzymes have still to be clarified. This chain is Wortmanamides biosynthesis cluster protein C, found in Talaromyces wortmannii (Penicillium wortmannii).